The sequence spans 277 residues: Undecaprenyl-diphosphatase 1 (277 aa).

The next 7 membrane-spanning stretches (helical) occupy residues 46–66 (VVGFSAVIQVGAIAAVLVYFF), 95–115 (WWVIYATIPIVIVGLAAKSLI), 119–139 (LASLWVVAASLIVGSGVMWAA), 165–185 (ILALLFPGFSRSGATMSTALI), 191–211 (VAATRLSFFLGIPALTGAGLY), 216–236 (ALGTGVGVAPLAVGTIVSFVV), and 256–276 (FVIYRIVIGVLLLGLLGTGVL).

This sequence belongs to the UppP family.

The protein resides in the cell membrane. The enzyme catalyses di-trans,octa-cis-undecaprenyl diphosphate + H2O = di-trans,octa-cis-undecaprenyl phosphate + phosphate + H(+). In terms of biological role, catalyzes the dephosphorylation of undecaprenyl diphosphate (UPP). Confers resistance to bacitracin. This Streptomyces avermitilis (strain ATCC 31267 / DSM 46492 / JCM 5070 / NBRC 14893 / NCIMB 12804 / NRRL 8165 / MA-4680) protein is Undecaprenyl-diphosphatase 1.